A 423-amino-acid chain; its full sequence is SH2 domain-containing protein 5 (423 aa).

Positions 28–146 (AQYVGSFPVD…LLCRSFQLAY (119 aa)) constitute a PID domain. The SH2 domain occupies 296–392 (WAFAGISRPC…LDMGRLNPTY (97 aa)). The interval 392–423 (YEEQDCGPPGRPPRTLRPLSHAKSEAELQGLG) is disordered.

In terms of assembly, interacts with BCR.

The protein resides in the postsynaptic density. Its function is as follows. May be involved in synaptic plasticity regulation through the control of Rac-GTP levels. This is SH2 domain-containing protein 5 from Homo sapiens (Human).